Consider the following 154-residue polypeptide: UPF0178 protein SSP2038 (154 aa).

This sequence belongs to the UPF0178 family.

The chain is UPF0178 protein SSP2038 from Staphylococcus saprophyticus subsp. saprophyticus (strain ATCC 15305 / DSM 20229 / NCIMB 8711 / NCTC 7292 / S-41).